Consider the following 439-residue polypeptide: Tubulin beta chain (439 aa).

Residues Gln11, Glu69, Ser138, Gly142, Thr143, Gly144, Asn204, and Asn226 each coordinate GTP. Glu69 lines the Mg(2+) pocket.

Belongs to the tubulin family. As to quaternary structure, dimer of alpha and beta chains. A typical microtubule is a hollow water-filled tube with an outer diameter of 25 nm and an inner diameter of 15 nM. Alpha-beta heterodimers associate head-to-tail to form protofilaments running lengthwise along the microtubule wall with the beta-tubulin subunit facing the microtubule plus end conferring a structural polarity. Microtubules usually have 13 protofilaments but different protofilament numbers can be found in some organisms and specialized cells. Mg(2+) is required as a cofactor.

The protein resides in the cytoplasm. It localises to the cytoskeleton. Functionally, tubulin is the major constituent of microtubules, a cylinder consisting of laterally associated linear protofilaments composed of alpha- and beta-tubulin heterodimers. Microtubules grow by the addition of GTP-tubulin dimers to the microtubule end, where a stabilizing cap forms. Below the cap, tubulin dimers are in GDP-bound state, owing to GTPase activity of alpha-tubulin. This chain is Tubulin beta chain (TUB2), found in Encephalitozoon cuniculi (strain GB-M1) (Microsporidian parasite).